A 465-amino-acid polypeptide reads, in one-letter code: Uronate isomerase (465 aa).

The protein belongs to the metallo-dependent hydrolases superfamily. Uronate isomerase family.

The enzyme catalyses D-glucuronate = D-fructuronate. The catalysed reaction is aldehydo-D-galacturonate = keto-D-tagaturonate. It participates in carbohydrate metabolism; pentose and glucuronate interconversion. This chain is Uronate isomerase, found in Streptococcus equi subsp. zooepidemicus (strain H70).